Consider the following 524-residue polypeptide: Tubulin-specific chaperone E (524 aa).

Ser-2 is modified (N-acetylserine). In terms of domain architecture, CAP-Gly spans 27–71 (GAVPPVAGLWLGVEWDNPERGKHDGSHEGTMYFKCRHPTGGSFVR). LRR repeat units lie at residues 154–175 (NIRV…VLIA), 180–201 (DLEA…PTLT), 206–227 (TLKT…HCAP), 231–253 (VLEE…NVLQ), 254–275 (KMRL…SLIA), 279–300 (RLEH…DAEI), and 309–330 (ALKY…NELD). Positions 343-381 (NPLSKADKAEEIIIAKIAQLRTLNRCQILPEERRGAELD) constitute an LRRCT domain. The residue at position 460 (Lys-460) is an N6-acetyllysine. Ser-492 carries the post-translational modification Phosphoserine.

Belongs to the TBCE family. As to quaternary structure, supercomplex made of cofactors A to E. Cofactors A and D function by capturing and stabilizing tubulin in a quasi-native conformation. Cofactor E binds to the cofactor D-tubulin complex; interaction with cofactor C then causes the release of tubulin polypeptides that are committed to the native state. Cofactors B and E can form a heterodimer which binds to alpha-tubulin and enhances their ability to dissociate tubulin heterodimers. Interacts with TBCD. In terms of tissue distribution, ubiquitously expressed.

It localises to the cytoplasm. Its subcellular location is the cytoskeleton. Its function is as follows. Tubulin-folding protein; involved in the second step of the tubulin folding pathway and in the regulation of tubulin heterodimer dissociation. Required for correct organization of microtubule cytoskeleton and mitotic splindle, and maintenance of the neuronal microtubule network. This Mus musculus (Mouse) protein is Tubulin-specific chaperone E (Tbce).